Reading from the N-terminus, the 220-residue chain is Recombination protein RecR (220 aa).

The C4-type zinc finger occupies 57–72; it reads CPICFNITDAEKCDVC. The region spanning 80 to 173 is the Toprim domain; it reads RTICVVEEPG…AISRIAYGVP (94 aa). The interval 190 to 220 is disordered; that stretch reads LTGRQTVSKPQPPQRPGDEDGADGAAVPASR.

The protein belongs to the RecR family.

Functionally, may play a role in DNA repair. It seems to be involved in an RecBC-independent recombinational process of DNA repair. It may act with RecF and RecO. This Deinococcus radiodurans (strain ATCC 13939 / DSM 20539 / JCM 16871 / CCUG 27074 / LMG 4051 / NBRC 15346 / NCIMB 9279 / VKM B-1422 / R1) protein is Recombination protein RecR.